Reading from the N-terminus, the 71-residue chain is Biotinylated protein TB7.3 homolog (71 aa).

The Biotinyl-binding domain maps to 2 to 71 (AEDVRAEIVA…QAGDLIAVIS (70 aa)). K37 carries the post-translational modification N6-biotinyllysine.

This Mycobacterium leprae (strain TN) protein is Biotinylated protein TB7.3 homolog.